The following is a 329-amino-acid chain: uncharacterized protein (329 aa).

Coiled coils occupy residues 57–120 (KKEE…QEVT) and 225–251 (QRQRQEEVQEVLQEAEKTHQATLGNMM).

This is an uncharacterized protein from Homo sapiens (Human).